The primary structure comprises 210 residues: FMN-dependent NADH:quinone oxidoreductase (210 aa).

FMN contacts are provided by residues 17–19, 102–105, and 148–151; these read SRS, MWNL, and SCGG.

The protein belongs to the azoreductase type 1 family. In terms of assembly, homodimer. FMN serves as cofactor.

The catalysed reaction is 2 a quinone + NADH + H(+) = 2 a 1,4-benzosemiquinone + NAD(+). It carries out the reaction N,N-dimethyl-1,4-phenylenediamine + anthranilate + 2 NAD(+) = 2-(4-dimethylaminophenyl)diazenylbenzoate + 2 NADH + 2 H(+). Functionally, quinone reductase that provides resistance to thiol-specific stress caused by electrophilic quinones. In terms of biological role, also exhibits azoreductase activity. Catalyzes the reductive cleavage of the azo bond in aromatic azo compounds to the corresponding amines. The protein is FMN-dependent NADH:quinone oxidoreductase of Trichlorobacter lovleyi (strain ATCC BAA-1151 / DSM 17278 / SZ) (Geobacter lovleyi).